The primary structure comprises 168 residues: Mitochondrial import inner membrane translocase subunit TIM14 (168 aa).

The segment covering 1-12 has biased composition (polar residues); that stretch reads MSSQSNTGNSIE. The tract at residues 1-29 is disordered; that stretch reads MSSQSNTGNSIEAPQLPIPGQTNGSANVT. Residues 1 to 65 are Mitochondrial intermembrane-facing; sequence MSSQSNTGNS…QALNYMGEHP (65 aa). The helical transmembrane segment at 66–83 threads the bilayer; it reads VITGFGAFLTLYFTAGAY. Over 84–168 the chain is Mitochondrial matrix; sequence KSISKGLNGG…DFLEKRGISK (85 aa). The J domain maps to 112 to 168; that stretch reads EALQILNLTENTLTKKKLKEVHRKIMLANHPDKGGSPFLATKINEAKDFLEKRGISK.

Belongs to the TIM14 family. Homodimer and heterodimer with PAM16/TIM16. Homodimerization may not be relevant in vivo, while heterodimerization is essential for activity regulation of mtHSP70. Component of the PAM complex, at least composed of mtHsp70, MGE1, TIM44, PAM16, PAM17 and PAM18/TIM14. Interacts directly with mtHsp70. Interacts directly with TIM17 subunit of the TIM23 complex.

It localises to the mitochondrion inner membrane. Functionally, essential component of the PAM complex, a complex required for the translocation of transit peptide-containing proteins from the inner membrane into the mitochondrial matrix in an ATP-dependent manner. In the complex, it is required to stimulate activity of mtHSP70 (SSC1). This chain is Mitochondrial import inner membrane translocase subunit TIM14 (PAM18), found in Saccharomyces cerevisiae (strain ATCC 204508 / S288c) (Baker's yeast).